A 77-amino-acid chain; its full sequence is U8-lycotoxin-Ls1b (77 aa).

Positions 1 to 20 (MKLIIFTGLVLFAIVSLIEA) are cleaved as a signal peptide. Residues 21-26 (QAENEK) constitute a propeptide that is removed on maturation.

Belongs to the neurotoxin 19 (CSTX) family. 08 (U8-Lctx) subfamily. In terms of processing, contains 4 disulfide bonds. In terms of tissue distribution, expressed by the venom gland.

It localises to the secreted. In Lycosa singoriensis (Wolf spider), this protein is U8-lycotoxin-Ls1b.